The chain runs to 392 residues: Chalcone synthase 1 (392 aa).

The active site involves Cys167.

It belongs to the thiolase-like superfamily. Chalcone/stilbene synthases family.

The catalysed reaction is (E)-4-coumaroyl-CoA + 3 malonyl-CoA + 3 H(+) = 2',4,4',6'-tetrahydroxychalcone + 3 CO2 + 4 CoA. It participates in secondary metabolite biosynthesis; flavonoid biosynthesis. In terms of biological role, the primary product of this enzyme is 4,2',4',6'-tetrahydroxychalcone (also termed naringenin-chalcone or chalcone) which can under specific conditions spontaneously isomerize into naringenin. This Secale cereale (Rye) protein is Chalcone synthase 1 (CHS1).